The chain runs to 446 residues: MLFTIQLIIILICLFYGARKGGIALGLLGGIGLVILVFVFHLQPGKPPVDVMLVIIAVVAASATLQASGGLDVMLQIAEKLLRRNPKYVSIVAPFVTCTLTILCGTGHVVYTILPIIYDVAIKNNIRPERPMAASSIGAQMGIIASPVSVAVVSLVAMLGNVTFDGRHLEFLDLLAITIPSTLIGILAIGIFSWFRGKDLDKDEEFQKFISVPENREYVYGDTATLLDKKLPKSNWLAMWIFLGAIAVVALLGADSDLRPSFGGKPLSMVLVIQMFMLLTGALIIILTKTNPASISKNEVFRSGMIAIVAVYGIAWMAETMFGAHMSEIQGVLGEMVKEYPWAYAIVLLLVSKFVNSQAAALAAIVPVALAIGVDPAYIVASAPACYGYYILPTYPSDLAAIQFDRSGTTHIGRFVINHSFILPGLIGVSVSCVFGWIFAAMYGFL.

The helical transmembrane segment at Met-1 to Ala-18 threads the bilayer. The Cytoplasmic portion of the chain corresponds to Arg-19–Gly-22. The helical transmembrane segment at Ile-23–Val-39 threads the bilayer. At Phe-40–Leu-53 the chain is on the periplasmic side. Residues Val-54–Gly-70 form a helical membrane-spanning segment. At Leu-71–Lys-87 the chain is on the cytoplasmic side. The segment at residues Tyr-88–Gly-105 is an intramembrane region (helical). Residues Thr-106–Leu-114 lie within the membrane without spanning it. Residues Pro-115–Pro-128 constitute an intramembrane region (helical). An intramembrane segment occupies Glu-129–Ala-133. Positions Ala-134–Leu-159 form an intramembrane region, helical. Residues Gly-160–Thr-178 are Periplasmic-facing. Residues Ile-179–Trp-194 traverse the membrane as a helical segment. Residues Phe-195 to Ser-234 lie on the Cytoplasmic side of the membrane. Residues Asn-235–Leu-252 form a helical membrane-spanning segment. The Periplasmic portion of the chain corresponds to Gly-253–Ser-268. The chain crosses the membrane as a helical span at residues Met-269–Leu-287. The Cytoplasmic portion of the chain corresponds to Thr-288–Gly-313. The chain crosses the membrane as a helical span at residues Ile-314–Gly-331. Topologically, residues Val-332–Pro-341 are periplasmic. The helical transmembrane segment at Trp-342 to Ile-365 threads the bilayer. Residues Val-366–Gly-425 lie on the Cytoplasmic side of the membrane. A helical membrane pass occupies residues Leu-426 to Tyr-443. Residues Gly-444 to Leu-446 are Periplasmic-facing.

It belongs to the DcuA/DcuB transporter (TC 2.A.13.1) family. In terms of assembly, interacts with DcuS.

It localises to the cell inner membrane. The catalysed reaction is fumarate(in) + succinate(out) = fumarate(out) + succinate(in). The enzyme catalyses (S)-malate(in) + succinate(out) = (S)-malate(out) + succinate(in). It catalyses the reaction L-aspartate(in) + succinate(out) = L-aspartate(out) + succinate(in). It carries out the reaction (S,S)-tartrate(out) + succinate(in) = (S,S)-tartrate(in) + succinate(out). Bifunctional protein with a transport and a regulatory function. Responsible for the transport of C4-dicarboxylates during anaerobic growth. Catalyzes the uptake of fumarate, malate, aspartate or D-tartrate coupled to the export of succinate. May function primarily as a C4-dicarboxylate transporter during fumarate respiration. Required for anaerobic growth on D-tartrate. In terms of biological role, in addition, possesses a regulatory function, which is independent from the transport function, and is required for the response of the DcuS/DcuR two-component system to C4-dicarboxylates. DcuB interacts physically with DcuS and converts DcuS to the C4-dicarboxylate responsive form. The sequence is that of Anaerobic C4-dicarboxylate transporter DcuB (dcuB) from Escherichia coli O157:H7.